A 505-amino-acid polypeptide reads, in one-letter code: Lysine--tRNA ligase (505 aa).

Positions 415 and 422 each coordinate Mg(2+).

It belongs to the class-II aminoacyl-tRNA synthetase family. In terms of assembly, homodimer. It depends on Mg(2+) as a cofactor.

It localises to the cytoplasm. The catalysed reaction is tRNA(Lys) + L-lysine + ATP = L-lysyl-tRNA(Lys) + AMP + diphosphate. This chain is Lysine--tRNA ligase, found in Pectobacterium carotovorum subsp. carotovorum (strain PC1).